Consider the following 380-residue polypeptide: Queuine tRNA-ribosyltransferase (380 aa).

The active-site Proton acceptor is the aspartate 96. Residues 96–100 (DSGGF), aspartate 150, glutamine 193, and glycine 220 each bind substrate. The interval 251–257 (GVGAPDS) is RNA binding. Aspartate 270 serves as the catalytic Nucleophile. The RNA binding; important for wobble base 34 recognition stretch occupies residues 275-279 (TRIAR). 4 residues coordinate Zn(2+): cysteine 308, cysteine 310, cysteine 313, and histidine 339.

This sequence belongs to the queuine tRNA-ribosyltransferase family. Homodimer. Within each dimer, one monomer is responsible for RNA recognition and catalysis, while the other monomer binds to the replacement base PreQ1. Zn(2+) serves as cofactor.

The enzyme catalyses 7-aminomethyl-7-carbaguanine + guanosine(34) in tRNA = 7-aminomethyl-7-carbaguanosine(34) in tRNA + guanine. It functions in the pathway tRNA modification; tRNA-queuosine biosynthesis. Its function is as follows. Catalyzes the base-exchange of a guanine (G) residue with the queuine precursor 7-aminomethyl-7-deazaguanine (PreQ1) at position 34 (anticodon wobble position) in tRNAs with GU(N) anticodons (tRNA-Asp, -Asn, -His and -Tyr). Catalysis occurs through a double-displacement mechanism. The nucleophile active site attacks the C1' of nucleotide 34 to detach the guanine base from the RNA, forming a covalent enzyme-RNA intermediate. The proton acceptor active site deprotonates the incoming PreQ1, allowing a nucleophilic attack on the C1' of the ribose to form the product. After dissociation, two additional enzymatic reactions on the tRNA convert PreQ1 to queuine (Q), resulting in the hypermodified nucleoside queuosine (7-(((4,5-cis-dihydroxy-2-cyclopenten-1-yl)amino)methyl)-7-deazaguanosine). This is Queuine tRNA-ribosyltransferase from Streptococcus pneumoniae (strain P1031).